A 449-amino-acid polypeptide reads, in one-letter code: Phosphoglucosamine mutase (449 aa).

Residue S100 is the Phosphoserine intermediate of the active site. S100, D241, D243, and D245 together coordinate Mg(2+). A Phosphoserine modification is found at S100.

Belongs to the phosphohexose mutase family. Mg(2+) serves as cofactor. In terms of processing, activated by phosphorylation.

The enzyme catalyses alpha-D-glucosamine 1-phosphate = D-glucosamine 6-phosphate. Catalyzes the conversion of glucosamine-6-phosphate to glucosamine-1-phosphate. The protein is Phosphoglucosamine mutase of Clostridium botulinum (strain ATCC 19397 / Type A).